Reading from the N-terminus, the 341-residue chain is N-acetyl-gamma-glutamyl-phosphate reductase (341 aa).

The active site involves Cys-148.

Belongs to the NAGSA dehydrogenase family. Type 1 subfamily.

The protein resides in the cytoplasm. It carries out the reaction N-acetyl-L-glutamate 5-semialdehyde + phosphate + NADP(+) = N-acetyl-L-glutamyl 5-phosphate + NADPH + H(+). The protein operates within amino-acid biosynthesis; L-arginine biosynthesis; N(2)-acetyl-L-ornithine from L-glutamate: step 3/4. Its function is as follows. Catalyzes the NADPH-dependent reduction of N-acetyl-5-glutamyl phosphate to yield N-acetyl-L-glutamate 5-semialdehyde. The polypeptide is N-acetyl-gamma-glutamyl-phosphate reductase (Pseudothermotoga lettingae (strain ATCC BAA-301 / DSM 14385 / NBRC 107922 / TMO) (Thermotoga lettingae)).